Here is a 1096-residue protein sequence, read N- to C-terminus: Eukaryotic translation initiation factor 3 subunit A (1096 aa).

The 180-residue stretch at 323-502 (QATRVLLATL…GSIHFGAADA (180 aa)) folds into the PCI domain. Coiled coils occupy residues 591 to 643 (SERQ…IDRK), 677 to 761 (SVLR…RMQK), and 811 to 839 (KEGA…ERRA). Over residues 808-852 (ELPKEGAEERMASAREVAEQTRRDEQEKERRAVRESQRPSKREIV) the composition is skewed to basic and acidic residues. The tract at residues 808-1096 (ELPKEGAEER…ADDDRNWRQK (289 aa)) is disordered. Residues 865–875 (AQPTQPRTISS) show a composition bias toward polar residues. Composition is skewed to basic and acidic residues over residues 878-890 (FGER…RYRE), 933-942 (SNREQARGEA), and 955-973 (QRDR…KRGE). The span at 1008-1023 (DSSQRTSAATPTTQPW) shows a compositional bias: polar residues. A compositionally biased stretch (basic and acidic residues) spans 1085-1096 (GAADDDRNWRQK).

The protein belongs to the eIF-3 subunit A family. Component of the eukaryotic translation initiation factor 3 (eIF-3) complex.

It localises to the cytoplasm. In terms of biological role, RNA-binding component of the eukaryotic translation initiation factor 3 (eIF-3) complex, which is involved in protein synthesis of a specialized repertoire of mRNAs and, together with other initiation factors, stimulates binding of mRNA and methionyl-tRNAi to the 40S ribosome. The eIF-3 complex specifically targets and initiates translation of a subset of mRNAs involved in cell proliferation. The chain is Eukaryotic translation initiation factor 3 subunit A from Brugia malayi (Filarial nematode worm).